The chain runs to 480 residues: Docking protein 1 (480 aa).

Met1 is modified (N-acetylmethionine). Positions 3-119 (GALMEGPLFL…WVQILCRTAF (117 aa)) constitute a PH domain. Ser48 is modified (phosphoserine). Positions 151-259 (EGSQFWVTSQ…QQQKAQGKVG (109 aa)) constitute an IRS-type PTB domain. Positions 253–262 (KAQGKVGQGQ) are enriched in low complexity. A disordered region spans residues 253 to 328 (KAQGKVGQGQ…GSTPAGAGEG (76 aa)). Residues 265–276 (TRTDSHDGETEG) show a composition bias toward basic and acidic residues. Residues Ser269 and Ser290 each carry the phosphoserine modification. Tyr295, Tyr336, and Tyr340 each carry phosphotyrosine. Residue Tyr361 is modified to Phosphotyrosine; by INSR. Phosphotyrosine is present on Tyr376. Tyr397 carries the post-translational modification Phosphotyrosine; by INSR. Residues 398–480 (ELPYNPATDD…RVGVKSEGST (83 aa)) are disordered. Tyr408 is subject to Phosphotyrosine. Residues 410–423 (VPPPRSSKPTPAPK) are compositionally biased toward pro residues. Residue Ser415 is modified to Phosphoserine. A compositionally biased stretch (low complexity) spans 432–445 (SGTTAGSGSKGSDT). The span at 446-455 (ALYSQVQKSG) shows a compositional bias: polar residues. Tyr448 bears the Phosphotyrosine mark.

Belongs to the DOK family. Type A subfamily. Interacts with RasGAP and INPP5D/SHIP1. Interacts directly with phosphorylated ITGB3. Interacts with SRMS (via the SH2 and SH3 domains). In terms of processing, constitutively tyrosine-phosphorylated. Phosphorylated by TEC. Phosphorylated by LYN. Phosphorylated on tyrosine residues by the insulin receptor kinase. Results in the negative regulation of the insulin signaling pathway. Phosphorylated on tyrosine residues by SRMS.

The protein localises to the cytoplasm. Its subcellular location is the nucleus. Functionally, DOK proteins are enzymatically inert adaptor or scaffolding proteins. They provide a docking platform for the assembly of multimolecular signaling complexes. DOK1 appears to be a negative regulator of the insulin signaling pathway. Modulates integrin activation by competing with talin for the same binding site on ITGB3. The polypeptide is Docking protein 1 (Dok1) (Rattus norvegicus (Rat)).